The chain runs to 175 residues: RNA pyrophosphohydrolase (175 aa).

A Nudix hydrolase domain is found at 6–150 (GFRPNVGIVI…KREVYRRVMK (145 aa)). The Nudix box motif lies at 38-59 (GGVDDGETPEQAMYRELYEEIG).

It belongs to the Nudix hydrolase family. RppH subfamily. Requires a divalent metal cation as cofactor.

Its function is as follows. Accelerates the degradation of transcripts by removing pyrophosphate from the 5'-end of triphosphorylated RNA, leading to a more labile monophosphorylated state that can stimulate subsequent ribonuclease cleavage. The polypeptide is RNA pyrophosphohydrolase (Aeromonas hydrophila subsp. hydrophila (strain ATCC 7966 / DSM 30187 / BCRC 13018 / CCUG 14551 / JCM 1027 / KCTC 2358 / NCIMB 9240 / NCTC 8049)).